The primary structure comprises 128 residues: Fluoride-specific ion channel FluC (128 aa).

A run of 4 helical transmembrane segments spans residues 10-30 (FLAV…AGLW), 40-60 (TLLV…VLLA), 71-91 (AAVT…AETV), and 102-122 (ALGY…LGLA). Na(+) is bound by residues Gly-78 and Thr-81.

Belongs to the fluoride channel Fluc/FEX (TC 1.A.43) family.

The protein localises to the cell inner membrane. It carries out the reaction fluoride(in) = fluoride(out). Na(+) is not transported, but it plays an essential structural role and its presence is essential for fluoride channel function. Functionally, fluoride-specific ion channel. Important for reducing fluoride concentration in the cell, thus reducing its toxicity. This chain is Fluoride-specific ion channel FluC, found in Bordetella petrii (strain ATCC BAA-461 / DSM 12804 / CCUG 43448).